A 242-amino-acid chain; its full sequence is Segregation and condensation protein A (242 aa).

It belongs to the ScpA family. In terms of assembly, component of a cohesin-like complex composed of ScpA, ScpB and the Smc homodimer, in which ScpA and ScpB bind to the head domain of Smc. The presence of the three proteins is required for the association of the complex with DNA.

The protein resides in the cytoplasm. Its function is as follows. Participates in chromosomal partition during cell division. May act via the formation of a condensin-like complex containing Smc and ScpB that pull DNA away from mid-cell into both cell halves. The protein is Segregation and condensation protein A of Streptococcus pneumoniae (strain Taiwan19F-14).